The primary structure comprises 616 residues: Schwannomin-interacting protein 1 homolog (616 aa).

Residues 38–50 show a composition bias toward acidic residues; that stretch reads ESDLTDSDREDDP. Disordered regions lie at residues 38-71, 204-251, and 292-320; these read ESDL…GQDS, LKQT…PDTF, and SSLE…YSNQ. 2 stretches are compositionally biased toward polar residues: residues 62-71 and 204-217; these read SETFKNGQDS and LKQT…GNST. The stretch at 550–594 forms a coiled coil; it reads LQLLVNNLQEYIENLNVTLLESLKERDDLNSDQDDILHDLEKINN.

It belongs to the SCHIP1 family. In terms of assembly, interacts with ex; the interaction results in recruitment of Schip1 to the apical cell membrane. Interacts with Tao; the interaction enhances Tao kinase activity. Interacts with Mer. In eye disks of the third instar larvae, expressed in all cells (at protein level).

The protein resides in the cell junction. It localises to the adherens junction. The protein localises to the apical cell membrane. In terms of biological role, regulator of the Hippo/SWH (Sav/Wts/Hpo) signaling pathway, a signaling pathway that plays a pivotal role in organ size control and tumor suppression by restricting proliferation and promoting apoptosis. The core of this pathway is composed of a kinase cascade wherein Hippo (hpo), in complex with its regulatory protein Salvador (sav), phosphorylates and activates Warts (wts) in complex with its regulatory protein Mats, which in turn phosphorylates and inactivates the Yorkie (yki) oncoprotein. Schip1 promotes kinase activity of Tao and enhances phosphorylation of hpo by Tao. This chain is Schwannomin-interacting protein 1 homolog, found in Drosophila melanogaster (Fruit fly).